A 121-amino-acid chain; its full sequence is Small ribosomal subunit protein uS13 (121 aa).

The disordered stretch occupies residues 89 to 121 (MRHRRGLPVRGQNTKNNARTRKGKKVSIAGKKK). A compositionally biased stretch (basic residues) spans 106-121 (ARTRKGKKVSIAGKKK).

The protein belongs to the universal ribosomal protein uS13 family. In terms of assembly, part of the 30S ribosomal subunit. Forms a loose heterodimer with protein S19. Forms two bridges to the 50S subunit in the 70S ribosome.

In terms of biological role, located at the top of the head of the 30S subunit, it contacts several helices of the 16S rRNA. In the 70S ribosome it contacts the 23S rRNA (bridge B1a) and protein L5 of the 50S subunit (bridge B1b), connecting the 2 subunits; these bridges are implicated in subunit movement. Contacts the tRNAs in the A and P-sites. The protein is Small ribosomal subunit protein uS13 of Latilactobacillus sakei subsp. sakei (strain 23K) (Lactobacillus sakei subsp. sakei).